The following is a 273-amino-acid chain: Exosome complex component Rrp42 (273 aa).

This sequence belongs to the RNase PH family. Rrp42 subfamily. As to quaternary structure, component of the archaeal exosome complex. Forms a hexameric ring-like arrangement composed of 3 Rrp41-Rrp42 heterodimers. The hexameric ring associates with a trimer of Rrp4 and/or Csl4 subunits.

The protein localises to the cytoplasm. Non-catalytic component of the exosome, which is a complex involved in RNA degradation. Contributes to the structuring of the Rrp41 active site. The chain is Exosome complex component Rrp42 from Thermococcus gammatolerans (strain DSM 15229 / JCM 11827 / EJ3).